Reading from the N-terminus, the 311-residue chain is 4-hydroxy-tetrahydrodipicolinate synthase (311 aa).

Threonine 51 contributes to the pyruvate binding site. The Proton donor/acceptor role is filled by tyrosine 140. Lysine 168 acts as the Schiff-base intermediate with substrate in catalysis. Isoleucine 209 lines the pyruvate pocket.

Belongs to the DapA family. In terms of assembly, homotetramer; dimer of dimers.

Its subcellular location is the cytoplasm. It carries out the reaction L-aspartate 4-semialdehyde + pyruvate = (2S,4S)-4-hydroxy-2,3,4,5-tetrahydrodipicolinate + H2O + H(+). Its pathway is amino-acid biosynthesis; L-lysine biosynthesis via DAP pathway; (S)-tetrahydrodipicolinate from L-aspartate: step 3/4. Catalyzes the condensation of (S)-aspartate-beta-semialdehyde [(S)-ASA] and pyruvate to 4-hydroxy-tetrahydrodipicolinate (HTPA). The protein is 4-hydroxy-tetrahydrodipicolinate synthase of Streptococcus pneumoniae (strain 70585).